The primary structure comprises 152 residues: Large ribosomal subunit protein uL22 (152 aa).

Belongs to the universal ribosomal protein uL22 family. Part of the 50S ribosomal subunit.

Its function is as follows. This protein binds specifically to 23S rRNA. It makes multiple contacts with different domains of the 23S rRNA in the assembled 50S subunit and ribosome. Functionally, the globular domain of the protein is located near the polypeptide exit tunnel on the outside of the subunit, while an extended beta-hairpin is found that lines the wall of the exit tunnel in the center of the 70S ribosome. This Nitrosopumilus maritimus (strain SCM1) protein is Large ribosomal subunit protein uL22.